Here is a 78-residue protein sequence, read N- to C-terminus: Large ribosomal subunit protein eL20 (78 aa).

Belongs to the eukaryotic ribosomal protein eL20 family. As to quaternary structure, part of the 50S ribosomal subunit. Binds 23S rRNA.

The chain is Large ribosomal subunit protein eL20 from Pyrobaculum calidifontis (strain DSM 21063 / JCM 11548 / VA1).